A 100-amino-acid chain; its full sequence is Small ribosomal subunit protein uS14 (100 aa).

This sequence belongs to the universal ribosomal protein uS14 family. As to quaternary structure, part of the 30S ribosomal subunit. Contacts proteins S3 and S10.

In terms of biological role, binds 16S rRNA, required for the assembly of 30S particles and may also be responsible for determining the conformation of the 16S rRNA at the A site. The protein is Small ribosomal subunit protein uS14 of Parasynechococcus marenigrum (strain WH8102).